The sequence spans 107 residues: ATP-dependent Clp protease adapter protein ClpS (107 aa).

This sequence belongs to the ClpS family. Binds to the N-terminal domain of the chaperone ClpA.

Its function is as follows. Involved in the modulation of the specificity of the ClpAP-mediated ATP-dependent protein degradation. This chain is ATP-dependent Clp protease adapter protein ClpS, found in Syntrophus aciditrophicus (strain SB).